The sequence spans 200 residues: Cuticle protein 19.8 (200 aa).

3 tandem repeats follow at residues 20–23, 26–29, and 43–46. The region spanning 56–127 is the Chitin-binding type R&amp;R domain; the sequence is HPQYSYGYSV…EPGVHAPIAA (72 aa). Positions 70-89 are disordered; it reads TGDSKSQQESRDGDVVQGSY. A run of 5 repeats spans residues 126 to 129, 144 to 147, 150 to 153, 159 to 162, and 177 to 180.

In terms of biological role, component of the cuticle of migratory locust which contains more than 100 different structural proteins. This is Cuticle protein 19.8 from Locusta migratoria (Migratory locust).